Consider the following 208-residue polypeptide: ER membrane protein complex subunit 8/9 homolog (208 aa).

The region spanning 11 to 146 (YEISQNAYIK…ERSPVMQLCV (136 aa)) is the MPN domain.

Belongs to the EMC8/EMC9 family.

The sequence is that of ER membrane protein complex subunit 8/9 homolog (EMB2731) from Arabidopsis thaliana (Mouse-ear cress).